The sequence spans 616 residues: Protein cereblon (616 aa).

Disordered stretches follow at residues methionine 1 to valine 39, phenylalanine 63 to arginine 137, and serine 182 to methionine 220. A compositionally biased stretch (low complexity) spans alanine 11–valine 32. Residues serine 96–glutamate 107 show a composition bias toward acidic residues. The segment covering glutamine 183–aspartate 192 has biased composition (basic and acidic residues). Positions valine 194–leucine 203 are enriched in acidic residues. The segment covering histidine 206 to proline 215 has biased composition (pro residues). Positions histidine 257–threonine 482 constitute a Lon N-terminal domain. The CULT domain maps to glutamate 481 to lysine 590. Residues cysteine 486, cysteine 489, cysteine 555, and cysteine 558 each contribute to the Zn(2+) site.

Belongs to the CRBN family. Likely a component of a DCX (DDB1-CUL4-X-box) protein ligase complex. May interact with pic/DDB1. Post-translationally, ubiquitinated.

The protein localises to the nucleus. The protein operates within protein modification; protein ubiquitination. Functionally, substrate recognition component of a DCX (DDB1-CUL4-X-box) E3 protein ligase complex that mediates the ubiquitination and subsequent proteasomal degradation of target proteins. Has an essential role in mediating growth by negatively regulating insulin signaling. It also has a role in maintaining presynaptic function in the neuromuscular junction synapses of third-instar larvae. The polypeptide is Protein cereblon (Drosophila persimilis (Fruit fly)).